The primary structure comprises 573 residues: DEAD-box ATP-dependent RNA helicase 47B (573 aa).

The Q motif signature appears at 131–159 (KSFEELGLPPLLIDRLNKEGLSTPTEVQS). The Helicase ATP-binding domain maps to 162–362 (IPIISQKHDA…RSWGHDPVLV (201 aa)). Residue 175-182 (SYTGSGKT) participates in ATP binding. Residues 293 to 296 (DEVD) carry the DEAD box motif. The Helicase C-terminal domain occupies 421-565 (TLRRCIHALE…PCEFTEGKLL (145 aa)).

This sequence belongs to the DEAD box helicase family.

It carries out the reaction ATP + H2O = ADP + phosphate + H(+). This is DEAD-box ATP-dependent RNA helicase 47B from Oryza sativa subsp. japonica (Rice).